Reading from the N-terminus, the 182-residue chain is MSESSLPSWHGTTILCLRKDGRVVIAGDGQVSLGATVIKGNARKVRKVGGGSILVGFAGATADAFTLLERLEAKLEKHPGQLTRACVELAKDWRTDRYLRRLEAMMAVADKDVSLVLTGQGDVLEPEDGIIGIGSGGNYALAAARALIDIDGLDAETIARKAMAIAAGICVYTNGNMIVESL.

T12 is an active-site residue. Na(+)-binding residues include A167, C170, and T173.

It belongs to the peptidase T1B family. HslV subfamily. As to quaternary structure, a double ring-shaped homohexamer of HslV is capped on each side by a ring-shaped HslU homohexamer. The assembly of the HslU/HslV complex is dependent on binding of ATP.

Its subcellular location is the cytoplasm. It catalyses the reaction ATP-dependent cleavage of peptide bonds with broad specificity.. Its activity is regulated as follows. Allosterically activated by HslU binding. Protease subunit of a proteasome-like degradation complex believed to be a general protein degrading machinery. This is ATP-dependent protease subunit HslV from Paramagnetospirillum magneticum (strain ATCC 700264 / AMB-1) (Magnetospirillum magneticum).